Reading from the N-terminus, the 343-residue chain is S-adenosylmethionine:tRNA ribosyltransferase-isomerase (343 aa).

It belongs to the QueA family. Monomer.

Its subcellular location is the cytoplasm. It catalyses the reaction 7-aminomethyl-7-carbaguanosine(34) in tRNA + S-adenosyl-L-methionine = epoxyqueuosine(34) in tRNA + adenine + L-methionine + 2 H(+). Its pathway is tRNA modification; tRNA-queuosine biosynthesis. Transfers and isomerizes the ribose moiety from AdoMet to the 7-aminomethyl group of 7-deazaguanine (preQ1-tRNA) to give epoxyqueuosine (oQ-tRNA). This Hydrogenobaculum sp. (strain Y04AAS1) protein is S-adenosylmethionine:tRNA ribosyltransferase-isomerase.